Here is a 203-residue protein sequence, read N- to C-terminus: Large ribosomal subunit protein uL13 (203 aa).

Alanine 2 carries the post-translational modification N-acetylalanine. Residue arginine 59 is modified to Citrulline. Residue serine 77 is modified to Phosphoserine; by ZIPK/DAPK3. Residue arginine 140 is modified to Citrulline. Lysine 191 is modified (N6-acetyllysine).

The protein belongs to the universal ribosomal protein uL13 family. In terms of assembly, component of the 60S ribosome. Component of the GAIT complex. Interacts with EIF4G1. Post-translationally, phosphorylation at Ser-77 upon interferon-gamma treatment in macrophages involves a DAPK1-DAPK3 kinase cascade and is causing release from the ribosome, association with the GAIT complex and subsequent involvement in transcript-selective translation inhibition. Citrullinated by PADI4.

The protein resides in the cytoplasm. Its function is as follows. Associated with ribosomes but is not required for canonical ribosome function and has extra-ribosomal functions. Component of the GAIT (gamma interferon-activated inhibitor of translation) complex which mediates interferon-gamma-induced transcript-selective translation inhibition in inflammation processes. Upon interferon-gamma activation and subsequent phosphorylation dissociates from the ribosome and assembles into the GAIT complex which binds to stem loop-containing GAIT elements in the 3'-UTR of diverse inflammatory mRNAs (such as ceruplasmin) and suppresses their translation. In the GAIT complex interacts with m7G cap-bound eIF4G at or near the eIF3-binding site and blocks the recruitment of the 43S ribosomal complex. Involved in methylation of rRNA. The sequence is that of Large ribosomal subunit protein uL13 (Rpl13a) from Mus musculus (Mouse).